Consider the following 365-residue polypeptide: tRNA/tmRNA (uracil-C(5))-methyltransferase (365 aa).

The S-adenosyl-L-methionine site is built by Q189, Y217, N222, E238, and D298. The active-site Nucleophile is C323. E357 functions as the Proton acceptor in the catalytic mechanism.

It belongs to the class I-like SAM-binding methyltransferase superfamily. RNA M5U methyltransferase family. TrmA subfamily.

It carries out the reaction uridine(54) in tRNA + S-adenosyl-L-methionine = 5-methyluridine(54) in tRNA + S-adenosyl-L-homocysteine + H(+). The catalysed reaction is uridine(341) in tmRNA + S-adenosyl-L-methionine = 5-methyluridine(341) in tmRNA + S-adenosyl-L-homocysteine + H(+). Its function is as follows. Dual-specificity methyltransferase that catalyzes the formation of 5-methyluridine at position 54 (m5U54) in all tRNAs, and that of position 341 (m5U341) in tmRNA (transfer-mRNA). This Shewanella baltica (strain OS185) protein is tRNA/tmRNA (uracil-C(5))-methyltransferase.